A 600-amino-acid chain; its full sequence is Glutamine--fructose-6-phosphate aminotransferase [isomerizing] (600 aa).

Cys2 serves as the catalytic Nucleophile; for GATase activity. Residues 2-217 (CGIVGYIGYQ…DGELVIVTSE (216 aa)) form the Glutamine amidotransferase type-2 domain. 2 SIS domains span residues 283 to 422 (IINE…AKGF) and 452 to 590 (IASD…VDKP). The For Fru-6P isomerization activity role is filled by Lys595.

As to quaternary structure, homodimer.

The protein localises to the cytoplasm. The catalysed reaction is D-fructose 6-phosphate + L-glutamine = D-glucosamine 6-phosphate + L-glutamate. In terms of biological role, catalyzes the first step in hexosamine metabolism, converting fructose-6P into glucosamine-6P using glutamine as a nitrogen source. In Geobacillus kaustophilus (strain HTA426), this protein is Glutamine--fructose-6-phosphate aminotransferase [isomerizing].